Consider the following 318-residue polypeptide: Methionyl-tRNA formyltransferase (318 aa).

112–115 (SLLP) serves as a coordination point for (6S)-5,6,7,8-tetrahydrofolate.

It belongs to the Fmt family.

It catalyses the reaction L-methionyl-tRNA(fMet) + (6R)-10-formyltetrahydrofolate = N-formyl-L-methionyl-tRNA(fMet) + (6S)-5,6,7,8-tetrahydrofolate + H(+). Attaches a formyl group to the free amino group of methionyl-tRNA(fMet). The formyl group appears to play a dual role in the initiator identity of N-formylmethionyl-tRNA by promoting its recognition by IF2 and preventing the misappropriation of this tRNA by the elongation apparatus. The chain is Methionyl-tRNA formyltransferase from Mycobacterium leprae (strain Br4923).